A 209-amino-acid polypeptide reads, in one-letter code: Inner membrane protein YjdF (209 aa).

Topologically, residues 1-7 (MTRTLKP) are periplasmic. A helical transmembrane segment spans residues 8 to 28 (LILNTSALTLTLILIYTGISA). The Cytoplasmic portion of the chain corresponds to 29–31 (HDK). A helical transmembrane segment spans residues 32-52 (LTWLMEVTPVIIVVQLLLATA). Topologically, residues 53 to 55 (RRY) are periplasmic. Residues 56–76 (PLTPLLYTLIFLHAIILMVGG) traverse the membrane as a helical segment. The Cytoplasmic portion of the chain corresponds to 77-131 (QYTYAKVPVGFEVQEWLGLSRNPYDKLGHFFQGLVPALVAREILVRGMYVRGRKM). Residues 132–152 (VAFLVCCVALAISAMYELIEW) form a helical membrane-spanning segment. At 153-177 (WAALAMGQGADDFLGTQGDQWDTQS) the chain is on the periplasmic side. A helical membrane pass occupies residues 178–198 (DMFCALLGALTTVIFLARFHC). Topologically, residues 199-209 (RQLRRFGLITG) are cytoplasmic.

It localises to the cell inner membrane. The polypeptide is Inner membrane protein YjdF (yjdF) (Escherichia coli (strain K12)).